Consider the following 247-residue polypeptide: MFRSLLKRTTFLNQLNKSNGFNRNYFKQSTLTRSDALSRHVETEDNNEHTPFDFTQENLVKVEKILAKYPKQYRQSALIPLLDLAQRQNGGWISLRAMDKVAHICGIAPMTAYEVASFYTMFNRTKIGENFVQVCTTTPCMLRGSGEIIKTCKSHLGIQVGETTPDNKFTLVEVECLGACVNAPMMCINDDFYEDLTSASTINLLDQIKNNKPTKIGPQTHRKAAEGPQGKTTLLEPPVGPTCRDDL.

Residues 1–40 (MFRSLLKRTTFLNQLNKSNGFNRNYFKQSTLTRSDALSRH) constitute a mitochondrion transit peptide. The [2Fe-2S] cluster site is built by Cys-135, Cys-140, Cys-176, and Cys-180. The segment at 211–247 (NKPTKIGPQTHRKAAEGPQGKTTLLEPPVGPTCRDDL) is disordered.

It belongs to the complex I 24 kDa subunit family. As to quaternary structure, complex I is composed of 45 different subunits. This is a component of the flavoprotein-sulfur (FP) fragment of the enzyme. The cofactor is [2Fe-2S] cluster.

Its subcellular location is the mitochondrion inner membrane. It catalyses the reaction a ubiquinone + NADH + 5 H(+)(in) = a ubiquinol + NAD(+) + 4 H(+)(out). Core subunit of the mitochondrial membrane respiratory chain NADH dehydrogenase (Complex I) that is believed to belong to the minimal assembly required for catalysis. Complex I functions in the transfer of electrons from NADH to the respiratory chain. The immediate electron acceptor for the enzyme is believed to be ubiquinone. The chain is NADH dehydrogenase [ubiquinone] flavoprotein 2, mitochondrial (ndufv2) from Dictyostelium discoideum (Social amoeba).